The primary structure comprises 394 residues: Shematrin-like protein 2 (394 aa).

The N-terminal stretch at 1-19 is a signal peptide; it reads MKPFISLASLIVLIASASA.

In terms of tissue distribution, prismatic layer of shell (at protein level). Expressed primarily in the mantle with highest level in the mantle edge and lower level in the mantle pallium.

It is found in the secreted. The polypeptide is Shematrin-like protein 2 (Pinctada maxima (Silver-lipped pearl oyster)).